The sequence spans 129 residues: Lysozyme C, milk isozyme (129 aa).

The region spanning Lys1–Leu129 is the C-type lysozyme domain. 4 disulfides stabilise this stretch: Cys6–Cys127, Cys30–Cys115, Cys65–Cys80, and Cys76–Cys94. Active-site residues include Glu35 and Asp53. 5 residues coordinate Ca(2+): Lys82, Asp85, Asn87, Asp90, and Asp91.

It belongs to the glycosyl hydrolase 22 family. In terms of assembly, monomer. The cofactor is Ca(2+).

The enzyme catalyses Hydrolysis of (1-&gt;4)-beta-linkages between N-acetylmuramic acid and N-acetyl-D-glucosamine residues in a peptidoglycan and between N-acetyl-D-glucosamine residues in chitodextrins.. In terms of biological role, lysozymes have primarily a bacteriolytic function; those in tissues and body fluids are associated with the monocyte-macrophage system and enhance the activity of immunoagents. This is Lysozyme C, milk isozyme from Canis lupus familiaris (Dog).